A 213-amino-acid chain; its full sequence is Carboxysome shell protein CcmP (213 aa).

BMC circularly permuted domains are found at residues 4-106 (ELRS…RLKP) and 107-211 (KIVS…GDRS). Positions 69–70 (ER) match the Probably important for pore gating motif.

The protein belongs to the EutL/PduB family. In terms of assembly, a dimer of stacked trimers, the same faces interact.

It is found in the carboxysome. In terms of biological role, probably part of the carboxysome shell, a polyhedral inclusion where RuBisCO (ribulose bisphosphate carboxylase, rbcL-rbcS) is sequestered. It is thought that this protein controls transport of RuBisCO reactants in and out of the carboxysome; residual densities in the 4 X-ray structures suggest that differing compounds bind in interior pockets, depending on the open or closed state of the pore. This Synechococcus elongatus (strain ATCC 33912 / PCC 7942 / FACHB-805) (Anacystis nidulans R2) protein is Carboxysome shell protein CcmP.